Reading from the N-terminus, the 376-residue chain is Cyclin-dependent kinase 9-B (376 aa).

Residues 19 to 319 (YERLAKIGQG…SDEALNHDFF (301 aa)) enclose the Protein kinase domain. Residues 25-33 (IGQGTFGEV) and K48 contribute to the ATP site. Residue D153 is the Proton acceptor of the active site. Positions 345–376 (PPRRRGGHMPQQPANQARNPAATNQSEFDRVF) are disordered. The segment covering 354–369 (PQQPANQARNPAATNQ) has biased composition (low complexity).

This sequence belongs to the protein kinase superfamily. CMGC Ser/Thr protein kinase family. CDC2/CDKX subfamily. In terms of assembly, associates with cyclin-T to form P-TEFb.

It is found in the nucleus. It catalyses the reaction L-seryl-[protein] + ATP = O-phospho-L-seryl-[protein] + ADP + H(+). The enzyme catalyses L-threonyl-[protein] + ATP = O-phospho-L-threonyl-[protein] + ADP + H(+). The catalysed reaction is [DNA-directed RNA polymerase] + ATP = phospho-[DNA-directed RNA polymerase] + ADP + H(+). Its function is as follows. Member of the cyclin-dependent kinase pair (CDK9/cyclin-T) complex, also called positive transcription elongation factor B (P-TEFb), which is proposed to facilitate the transition from abortive to production elongation by phosphorylating the CTD (C-terminal domain) of the large subunit of RNA polymerase II (RNAP II) and SUPT5H. The protein is Cyclin-dependent kinase 9-B (cdk9-b) of Xenopus laevis (African clawed frog).